Consider the following 313-residue polypeptide: Formimidoylglutamase (313 aa).

H130, D155, H157, D159, D241, and D243 together coordinate Mn(2+).

The protein belongs to the arginase family. Requires Mn(2+) as cofactor.

It catalyses the reaction N-formimidoyl-L-glutamate + H2O = formamide + L-glutamate. Its pathway is amino-acid degradation; L-histidine degradation into L-glutamate; L-glutamate from N-formimidoyl-L-glutamate (hydrolase route): step 1/1. In terms of biological role, catalyzes the conversion of N-formimidoyl-L-glutamate to L-glutamate and formamide. The polypeptide is Formimidoylglutamase (Salmonella typhi).